Consider the following 495-residue polypeptide: Probable cytochrome P450 4s3 (495 aa).

Residues Glu-307 and Cys-436 each coordinate heme.

This sequence belongs to the cytochrome P450 family. Heme is required as a cofactor.

It is found in the endoplasmic reticulum membrane. Its subcellular location is the microsome membrane. In terms of biological role, may be involved in the metabolism of insect hormones and in the breakdown of synthetic insecticides. This is Probable cytochrome P450 4s3 (Cyp4s3) from Drosophila melanogaster (Fruit fly).